Here is a 201-residue protein sequence, read N- to C-terminus: Dephospho-CoA kinase (201 aa).

A DPCK domain is found at 4-201 (SVGLTGNIAS…KYLREAKIKQ (198 aa)). 12 to 17 (ASGKST) contacts ATP.

This sequence belongs to the CoaE family.

The protein localises to the cytoplasm. It catalyses the reaction 3'-dephospho-CoA + ATP = ADP + CoA + H(+). It participates in cofactor biosynthesis; coenzyme A biosynthesis; CoA from (R)-pantothenate: step 5/5. Catalyzes the phosphorylation of the 3'-hydroxyl group of dephosphocoenzyme A to form coenzyme A. The protein is Dephospho-CoA kinase of Legionella pneumophila subsp. pneumophila (strain Philadelphia 1 / ATCC 33152 / DSM 7513).